The primary structure comprises 185 residues: MAREREQRHEREDRDNTFVDKLVHINRVAKVVKGGRRFGFAALVVVGDQKGRVGFGHGKAREVPEAIRKATESAKRALIRVPLREGRTLHHDVHGHHGAGKVILRAAPAGTGIIAGGPMRAVFETLGMHDVVAKSFGSSNPYNMVRATFDALKNQDSPRSVAARRGIKVSQLQSRRRVEDAEATD.

The S5 DRBM domain occupies Phe-18 to Val-81. A disordered region spans residues Ser-157–Asp-185. Basic and acidic residues predominate over residues Arg-176–Asp-185.

This sequence belongs to the universal ribosomal protein uS5 family. As to quaternary structure, part of the 30S ribosomal subunit. Contacts proteins S4 and S8.

Its function is as follows. With S4 and S12 plays an important role in translational accuracy. Functionally, located at the back of the 30S subunit body where it stabilizes the conformation of the head with respect to the body. This chain is Small ribosomal subunit protein uS5, found in Xanthobacter autotrophicus (strain ATCC BAA-1158 / Py2).